Here is a 407-residue protein sequence, read N- to C-terminus: (R)-phenyllactyl-CoA dehydratase alpha subunit (407 aa).

Positions 1–4 are excised as a propeptide; sequence MSDR.

It belongs to the FldB/FldC dehydratase alpha/beta subunit family. In terms of assembly, part of the heterotrimeric phenyllactate dehydratase complex FldABC, composed of (R)-phenyllactate CoA-transferase (FldA) and a heterodimeric (R)-phenyllactyl-CoA dehydratase (FldB and FldC). [4Fe-4S] cluster is required as a cofactor. The cofactor is No flavin could be detected in the FldABC complex, and the addition of FAD, FMN or riboflavin to the dehydratase do not increase enzymatic activity..

The catalysed reaction is (R)-3-phenyllactoyl-CoA = (E)-cinnamoyl-CoA + H2O. It catalyses the reaction (R)-3-(4-hydroxyphenyl)lactoyl-CoA = (E)-4-coumaroyl-CoA + H2O. The enzyme catalyses (R)-3-(indol-3-yl)lactoyl-CoA = (E)-3-(indol-3-yl)acryloyl-CoA + H2O. Its pathway is amino-acid degradation; L-phenylalanine degradation. Functionally, component of the phenyllactate dehydratase complex FldABC that is involved in the fermentation of L-phenylalanine via a Stickland reaction. This complex catalyzes the reversible syn-dehydration of (R)-phenyllactate to (E)-cinnamate in two steps, a CoA-transfer from cinnamoyl-CoA to phenyllactate, catalyzed by FldA, followed by the dehydration of phenyllactyl-CoA to cinnamoyl-CoA, catalyzed by FldB and FldC. Requires the activator FldI to initiate catalysis. The chain is (R)-phenyllactyl-CoA dehydratase alpha subunit from Clostridium sporogenes.